We begin with the raw amino-acid sequence, 343 residues long: 3-dehydroquinate synthase (343 aa).

NAD(+) contacts are provided by residues 61-66, 95-96, 119-120, lysine 132, lysine 141, asparagine 142, and 159-162; these read SGEKYK, GV, TT, and FLKT. Residues glutamate 174, histidine 231, and histidine 248 each coordinate Zn(2+).

Belongs to the sugar phosphate cyclases superfamily. Dehydroquinate synthase family. In terms of assembly, homodimer. It depends on NAD(+) as a cofactor. The cofactor is Co(2+). Zn(2+) is required as a cofactor.

The protein localises to the cytoplasm. It carries out the reaction 7-phospho-2-dehydro-3-deoxy-D-arabino-heptonate = 3-dehydroquinate + phosphate. The protein operates within metabolic intermediate biosynthesis; chorismate biosynthesis; chorismate from D-erythrose 4-phosphate and phosphoenolpyruvate: step 2/7. In terms of biological role, catalyzes the conversion of 3-deoxy-D-arabino-heptulosonate 7-phosphate (DAHP) to dehydroquinate (DHQ). In Helicobacter pylori (strain ATCC 700392 / 26695) (Campylobacter pylori), this protein is 3-dehydroquinate synthase.